A 456-amino-acid chain; its full sequence is Bifunctional protein GlmU (456 aa).

Residues 1–228 (MPQNTLNTVI…SHLAAGVNNK (228 aa)) form a pyrophosphorylase region. UDP-N-acetyl-alpha-D-glucosamine-binding positions include 11-14 (LAAG), Lys25, Gln75, 80-81 (GT), 102-104 (YGD), Gly138, Glu153, Asn168, and Asn226. Asp104 contributes to the Mg(2+) binding site. Asn226 is a binding site for Mg(2+). Positions 229 to 249 (RQLAELERIFQTEQAQELLKA) are linker. An N-acetyltransferase region spans residues 250–456 (GVTLRDPARF…GWVRPEKNKQ (207 aa)). 2 residues coordinate UDP-N-acetyl-alpha-D-glucosamine: Arg332 and Lys350. His362 functions as the Proton acceptor in the catalytic mechanism. 2 residues coordinate UDP-N-acetyl-alpha-D-glucosamine: Tyr365 and Asn376. Residues Ala379, 385-386 (NY), Ser404, Ala422, and Arg439 each bind acetyl-CoA.

This sequence in the N-terminal section; belongs to the N-acetylglucosamine-1-phosphate uridyltransferase family. It in the C-terminal section; belongs to the transferase hexapeptide repeat family. Homotrimer. Mg(2+) is required as a cofactor.

It is found in the cytoplasm. It carries out the reaction alpha-D-glucosamine 1-phosphate + acetyl-CoA = N-acetyl-alpha-D-glucosamine 1-phosphate + CoA + H(+). The catalysed reaction is N-acetyl-alpha-D-glucosamine 1-phosphate + UTP + H(+) = UDP-N-acetyl-alpha-D-glucosamine + diphosphate. It functions in the pathway nucleotide-sugar biosynthesis; UDP-N-acetyl-alpha-D-glucosamine biosynthesis; N-acetyl-alpha-D-glucosamine 1-phosphate from alpha-D-glucosamine 6-phosphate (route II): step 2/2. Its pathway is nucleotide-sugar biosynthesis; UDP-N-acetyl-alpha-D-glucosamine biosynthesis; UDP-N-acetyl-alpha-D-glucosamine from N-acetyl-alpha-D-glucosamine 1-phosphate: step 1/1. The protein operates within bacterial outer membrane biogenesis; LPS lipid A biosynthesis. In terms of biological role, catalyzes the last two sequential reactions in the de novo biosynthetic pathway for UDP-N-acetylglucosamine (UDP-GlcNAc). The C-terminal domain catalyzes the transfer of acetyl group from acetyl coenzyme A to glucosamine-1-phosphate (GlcN-1-P) to produce N-acetylglucosamine-1-phosphate (GlcNAc-1-P), which is converted into UDP-GlcNAc by the transfer of uridine 5-monophosphate (from uridine 5-triphosphate), a reaction catalyzed by the N-terminal domain. In Neisseria gonorrhoeae, this protein is Bifunctional protein GlmU.